An 82-amino-acid chain; its full sequence is Small ribosomal subunit protein bS16 (82 aa).

The protein belongs to the bacterial ribosomal protein bS16 family.

The polypeptide is Small ribosomal subunit protein bS16 (Vibrio campbellii (strain ATCC BAA-1116)).